The chain runs to 669 residues: Phosphatidylinositol-3-phosphate phosphatase MTMR1 (669 aa).

Methionine 1 carries the post-translational modification N-acetylmethionine. Positions 1 to 17 are enriched in low complexity; it reads MDRPVAAAAAASAASCE. A disordered region spans residues 1-55; it reads MDRPVAAAAAASAASCEGAGGPGPGPGASWRPSRVAGGASASSRHPSIETLDSPT. A phosphoserine mark is found at serine 47 and serine 53. In terms of domain architecture, GRAM spans 94 to 165; sequence NKLAQMEEAP…GVISRVEKIG (72 aa). Residues 230-605 enclose the Myotubularin phosphatase domain; the sequence is GWKVYDPVSE…SHLELWVNYY (376 aa). A 1,2-diacyl-sn-glycero-3-phospho-(1D-myo-inositol-3-phosphate) contacts are provided by asparagine 355, asparagine 380, and isoleucine 381. Cysteine 442 acts as the Phosphocysteine intermediate in catalysis. Serine 443, aspartate 444, glycine 445, tryptophan 446, aspartate 447, arginine 448, and arginine 488 together coordinate a 1,2-diacyl-sn-glycero-3-phospho-(1D-myo-inositol-3-phosphate). Serine 443 contributes to the phosphate binding site. Phosphate contacts are provided by glycine 445, tryptophan 446, aspartate 447, and arginine 448. The interval 612 to 669 is required for dimerization; sequence MRPQMPIHQNLKELLAIKAELQKRVEDLQREMATRTISSSSERGSSPTHSATPVHTSV. The tract at residues 644-669 is disordered; it reads ATRTISSSSERGSSPTHSATPVHTSV. Residues 649–661 are compositionally biased toward low complexity; it reads SSSSERGSSPTHS.

It belongs to the protein-tyrosine phosphatase family. Non-receptor class myotubularin subfamily. Homodimer. Widely expressed. Detected in skeletal muscle, heart, lung, liver and brain.

The protein localises to the cell membrane. It is found in the cytoplasm. The catalysed reaction is a 1,2-diacyl-sn-glycero-3-phospho-(1D-myo-inositol-3-phosphate) + H2O = a 1,2-diacyl-sn-glycero-3-phospho-(1D-myo-inositol) + phosphate. It carries out the reaction 1,2-dioctanoyl-sn-glycero-3-phospho-(1-D-myo-inositol-3-phosphate) + H2O = 1,2-dioctanoyl-sn-glycero-3-phospho-(1D-myo-inositol) + phosphate. It catalyses the reaction a 1,2-diacyl-sn-glycero-3-phospho-(1D-myo-inositol-3,5-bisphosphate) + H2O = a 1,2-diacyl-sn-glycero-3-phospho-(1D-myo-inositol-5-phosphate) + phosphate. Functionally, lipid phosphatase that specifically dephosphorylates the D-3 position of phosphatidylinositol 3-phosphate, generating phosphatidylinositol. Could also dephosphorylate phosphatidylinositol 3,5-bisphosphate to produce phosphatidylinositol 5-phosphate. This is Phosphatidylinositol-3-phosphate phosphatase MTMR1 from Mus musculus (Mouse).